We begin with the raw amino-acid sequence, 164 residues long: Respiratory growth induced protein 2 (164 aa).

Belongs to the RGI1 family.

Its subcellular location is the cytoplasm. Its function is as follows. Involved in the control of energetic metabolism and significantly contribute to cell fitness, especially under respiratory growth conditions. The protein is Respiratory growth induced protein 2 (RGI2) of Saccharomyces cerevisiae (strain JAY291) (Baker's yeast).